Reading from the N-terminus, the 321-residue chain is uncharacterized protein (321 aa).

This is an uncharacterized protein from Galliformes (FAdV-1).